Consider the following 319-residue polypeptide: Nucleotide-binding protein Rru_A3448 (319 aa).

The disordered stretch occupies residues 1–34; the sequence is MGRSASLLRLRDPAPLPTDIAPDPAEAPPSPAAD. 42–49 lines the ATP pocket; sequence GMSGAGRT. Residue 90 to 93 coordinates GTP; that stretch reads DTRT.

It belongs to the RapZ-like family.

Displays ATPase and GTPase activities. The chain is Nucleotide-binding protein Rru_A3448 from Rhodospirillum rubrum (strain ATCC 11170 / ATH 1.1.1 / DSM 467 / LMG 4362 / NCIMB 8255 / S1).